Reading from the N-terminus, the 128-residue chain is MQERFSAVLLVGAGGFAGASARYLIAVALSSFATGFPMATMLVNVLGCFLIGMISELSLTTSLLPSELRLLLATGFCGGFTTFSSYMYEISALLKDGELFYASLYLIGSLVGGMVFLYLGMALARVWS.

A run of 4 helical transmembrane segments spans residues 7–27 (AVLL…LIAV), 34–54 (TGFP…IGMI), 70–90 (LLLA…MYEI), and 104–124 (LYLI…MALA). Glycine 78 and threonine 81 together coordinate Na(+).

Belongs to the fluoride channel Fluc/FEX (TC 1.A.43) family.

It is found in the cell inner membrane. The enzyme catalyses fluoride(in) = fluoride(out). Its activity is regulated as follows. Na(+) is not transported, but it plays an essential structural role and its presence is essential for fluoride channel function. Functionally, fluoride-specific ion channel. Important for reducing fluoride concentration in the cell, thus reducing its toxicity. This is Fluoride-specific ion channel FluC from Prosthecochloris aestuarii (strain DSM 271 / SK 413).